The following is a 405-amino-acid chain: Growth/differentiation factor 11 (405 aa).

The signal sequence occupies residues 1-20 (MVLAAPLLLGFLLLALELRP). Residues 21–296 (RGEAAEGPAA…VLENTKRSRR (276 aa)) constitute a propeptide that is removed on maturation. Asn92 is a glycosylation site (N-linked (GlcNAc...) asparagine). Disulfide bonds link Cys302/Cys312, Cys311/Cys370, Cys339/Cys402, and Cys343/Cys404.

It belongs to the TGF-beta family. In terms of assembly, homodimer; disulfide-linked. Interacts directly with ACVR2B. Interacts directly with ACVR2A. Interacts with ACVR1B, TGFBR1 and ACVR1C in an ACVR2B-dependent manner. Interacts with FST isoform 2/FS288. Post-translationally, synthesized as large precursor molecule that undergoes proteolytic cleavage by furin-like proteases. This produces an inactive form consisting of the mature C-terminal portion non-covalently bound to its cleaved N-terminal propeptide. Activation of the mature form requires additional cleavage of the propeptide by a tolloid-like metalloproteinase. In terms of tissue distribution, highly expressed in the developing limb bud, initially detected in the distal mesenchyme, and later localizing to regions around the developing bones. Is also expressed in adult dental pulp and brain.

Its subcellular location is the secreted. In terms of biological role, secreted signal that acts globally to regulate anterior/posterior axial patterning during development. May play critical roles in patterning both mesodermal and neural tissues. It is required for proper vertebral patterning and orofacial development. Signals through activin receptors type-2, ACVR2A and ACVR2B, and activin receptors type-1, ACVR1B, ACVR1C and TGFBR1 leading to the phosphorylation of SMAD2 and SMAD3. This Mus musculus (Mouse) protein is Growth/differentiation factor 11 (Gdf11).